A 295-amino-acid polypeptide reads, in one-letter code: Small ribosomal subunit protein uS2 (295 aa).

Positions 263–295 are disordered; that stretch reads KKFSKTKNIDEETNTEFEQALNDADENKNSDNA.

This sequence belongs to the universal ribosomal protein uS2 family.

The protein is Small ribosomal subunit protein uS2 of Rickettsia massiliae (strain Mtu5).